A 791-amino-acid chain; its full sequence is Sphingomyelin phosphodiesterase 4 (791 aa).

The chain crosses the membrane as a helical span at residues 755-775 (LFALLSFGLFSSTGLILIISF).

Mg(2+) is required as a cofactor.

It localises to the endoplasmic reticulum membrane. It is found in the golgi apparatus membrane. Its subcellular location is the nucleus envelope. The protein resides in the cell membrane. The protein localises to the sarcolemma. The catalysed reaction is a sphingomyelin + H2O = phosphocholine + an N-acylsphing-4-enine + H(+). In terms of biological role, catalyzes the hydrolysis of membrane sphingomyelin to form phosphorylcholine and ceramide. It has a relevant role in the homeostasis of membrane sphingolipids, thereby influencing membrane integrity, and endoplasmic reticulum organization and function. May sensitize cells to DNA damage-induced apoptosis. The chain is Sphingomyelin phosphodiesterase 4 (smpd4) from Danio rerio (Zebrafish).